The following is a 170-amino-acid chain: Peptide methionine sulfoxide reductase MsrA (170 aa).

The active site involves C14.

It belongs to the MsrA Met sulfoxide reductase family.

The catalysed reaction is L-methionyl-[protein] + [thioredoxin]-disulfide + H2O = L-methionyl-(S)-S-oxide-[protein] + [thioredoxin]-dithiol. The enzyme catalyses [thioredoxin]-disulfide + L-methionine + H2O = L-methionine (S)-S-oxide + [thioredoxin]-dithiol. Its function is as follows. Has an important function as a repair enzyme for proteins that have been inactivated by oxidation. Catalyzes the reversible oxidation-reduction of methionine sulfoxide in proteins to methionine. This is Peptide methionine sulfoxide reductase MsrA from Streptomyces avermitilis (strain ATCC 31267 / DSM 46492 / JCM 5070 / NBRC 14893 / NCIMB 12804 / NRRL 8165 / MA-4680).